A 101-amino-acid chain; its full sequence is Urease subunit gamma (101 aa).

The protein belongs to the urease gamma subunit family. Heterotrimer of UreA (gamma), UreB (beta) and UreC (alpha) subunits. Three heterotrimers associate to form the active enzyme.

It localises to the cytoplasm. The catalysed reaction is urea + 2 H2O + H(+) = hydrogencarbonate + 2 NH4(+). Its pathway is nitrogen metabolism; urea degradation; CO(2) and NH(3) from urea (urease route): step 1/1. The polypeptide is Urease subunit gamma (Geobacillus kaustophilus (strain HTA426)).